The sequence spans 187 residues: MGRYAKEPDNASKSCKSRGSNLRVHFKNTRETALAIKRMPLRRAQRFLKNVIEKKECVPFRRFNGGVGRCAQAKHWGTSVGRWPKKSAEFLLQLLKNAEANADYKGLDVDRLVINHIQVNRAPCLRRRTYRAHGRINPYMSSPCHIELSLTEKEDVVTKATDESEQAKKKLSKKKLQRQKEKMMRNE.

Basic and acidic residues-rich tracts occupy residues 158-168 and 178-187; these read TKATDESEQAK and RQKEKMMRNE. The tract at residues 158 to 187 is disordered; that stretch reads TKATDESEQAKKKLSKKKLQRQKEKMMRNE.

This sequence belongs to the universal ribosomal protein uL22 family.

The chain is Large ribosomal subunit protein uL22 (RpL17) from Anopheles gambiae (African malaria mosquito).